The following is a 507-amino-acid chain: ATP synthase subunit alpha (507 aa).

ATP is bound at residue 168–175 (GDRQTGKT).

The protein belongs to the ATPase alpha/beta chains family. F-type ATPases have 2 components, CF(1) - the catalytic core - and CF(0) - the membrane proton channel. CF(1) has five subunits: alpha(3), beta(3), gamma(1), delta(1), epsilon(1). CF(0) has three main subunits: a(1), b(2) and c(9-12). The alpha and beta chains form an alternating ring which encloses part of the gamma chain. CF(1) is attached to CF(0) by a central stalk formed by the gamma and epsilon chains, while a peripheral stalk is formed by the delta and b chains.

It is found in the cell membrane. It catalyses the reaction ATP + H2O + 4 H(+)(in) = ADP + phosphate + 5 H(+)(out). Its function is as follows. Produces ATP from ADP in the presence of a proton gradient across the membrane. The alpha chain is a regulatory subunit. This Mesomycoplasma hyopneumoniae (strain 232) (Mycoplasma hyopneumoniae) protein is ATP synthase subunit alpha.